The sequence spans 382 residues: MSVTDKRDEMSTARDKFAESQQEFESYADEFAADITAKQDDVSDLVDAITDFQAEMTNTTDAFHTYGDEFAAEVDHLRADIDAQRDVIREMQDAFEAYADIFATDIADKQDIGNLLAAIEALRTEMNSTHGAFEAYADDFAADVAALRDISDLVAAIDDFQEEFIAVQDAFDNYAGDFDAEIDQLHAAIADQHDSFDATADAFAEYRDEFYRIEVEALLEAINDFQQDIGDFRAEFETTEDAFVAFARDFYGHEITAEEGAAEAEAEPVEADADVEAEAEVSPDEAGGESAGTEEEETEPAEVETAAPEVEGSPADTADEAEDTEAEEETEEEAPEDMVQCRVCGEYYQAITEPHLQTHDMTIQEYRDEYGEDVPLRPDDKT.

The segment covering M1–A18 has biased composition (basic and acidic residues). The segment at M1–Q21 is disordered. A run of 7 repeats spans residues Q22–T60, D61–Q92, D93–H130, G131–Q168, D169–A200, D201–E240, and D241–D284. Positions Q22–D284 are 7 X approximate tandem repeats. The span at G260–E302 shows a compositional bias: acidic residues. The disordered stretch occupies residues G260–T382. Over residues V303–D316 the composition is skewed to low complexity. Residues T317–E336 show a composition bias toward acidic residues. The span at E365–T382 shows a compositional bias: basic and acidic residues.

This sequence belongs to the halobacterial gas vesicle GvpC family. Forms homodimers, interacts with GvpF1, GvpH1, GvpI1, GvpL1, GvpN1 and GvpO1 via its C-terminus (residues 329-382).

The protein resides in the gas vesicle. Its subcellular location is the cytoplasm. Confers stability, involved in shaping gas vesicles. Gas vesicles are hollow, gas filled proteinaceous nanostructures found in several microbial planktonic microorganisms. They allow positioning of halobacteria at the optimal depth for growth in the poorly aerated, shallow brine pools of their habitat. Functionally, expression of a 9.5 kb p-vac DNA fragment containing 2 divergently transcribed regions (gvpD-gvpE-gvpF-gvpG-gvpH-gvpI-gvpJ-gvpK-gvpL-gvpM and gvpA-gvpC-gvpN-gvpO) allows H.volcanii to produce gas vesicles. A similar region restores gas vesicle production in H.halobium without the p-vac locus, but it still has the c-vac locus. This Halobacterium salinarum (strain ATCC 700922 / JCM 11081 / NRC-1) (Halobacterium halobium) protein is Gas vesicle protein C1 (gvpC1).